The sequence spans 358 residues: MNVIHIAETVKGGVATVINNLTENNEIDSHVICPESQSKEIYCAQKTLFSRTGRNISSLSSLFLVIIKTLKYNKFDVIHLHSSFAGFIVRALFAFKLINKKKYKVIYTPHCFSFIMDTKKWKKKVYIYIERILAKQTDCIIANSYYEYKCAVDAGISKNKIKVVYNAVSLDGQEKLERIKKCNENEVQKEKINILFVGRFDKQKGYDYLLNVIKVADVSKYTFNIIGDSVHDVFEKIEKENVVYYGWVDNKELPAYFCENDVLLMPSRWESFGLVAVEAQLYGVPVIANNVASLPEVISDGLTGMLVNFEDANKVVEIMDSHTIHFWNEKKEACREFASNKFRKSDMVNSYVQIYKSY.

This is an uncharacterized protein from Klebsiella pneumoniae.